Here is a 491-residue protein sequence, read N- to C-terminus: Cytochrome P450 2B2 (491 aa).

Serine 128 carries the phosphoserine; by PKA modification. Cysteine 436 serves as a coordination point for heme.

The protein belongs to the cytochrome P450 family. Heme serves as cofactor. In terms of processing, phosphorylation is accompanied by a decrease in enzyme activity.

It is found in the endoplasmic reticulum membrane. The protein resides in the microsome membrane. It carries out the reaction an organic molecule + reduced [NADPH--hemoprotein reductase] + O2 = an alcohol + oxidized [NADPH--hemoprotein reductase] + H2O + H(+). Functionally, cytochromes P450 are a group of heme-thiolate monooxygenases. In liver microsomes, this enzyme is involved in an NADPH-dependent electron transport pathway. It oxidizes a variety of structurally unrelated compounds, including steroids, fatty acids, and xenobiotics. The sequence is that of Cytochrome P450 2B2 (Cyp2b2) from Rattus norvegicus (Rat).